An 841-amino-acid chain; its full sequence is Potassium transport protein 1 (841 aa).

Helical transmembrane passes span 24 to 44 and 80 to 100; these read YIYIISLTIIASILLFTGGTT and ILYGFTAITVPIWMHGSISFI. Asn116 and Asn164 each carry an N-linked (GlcNAc...) asparagine glycan. The interval 173–192 is disordered; it reads STNNPYFPDNPPSPKADISK. 2 N-linked (GlcNAc...) asparagine glycosylation sites follow: Asn215 and Asn401. 7 helical membrane passes run 469-489, 507-527, 537-557, 600-620, 662-682, 715-735, and 747-767; these read MVTLYFIIFNIAAFVTFIVFA, GWWALFSSASSFNDLGFSLIP, IFLLLISSLFIIAGNTGFPCF, WVLFFVLLLLNVIDLVLFMVL, AVLVSYMVMMYISVYPVAINM, LSYDLWYIFLGLFIICICEGG, and IFTVLFEVVSAYGTVGLSTGL. N-linked (GlcNAc...) asparagine glycosylation is present at Asn771.

This sequence belongs to the TrkH potassium transport family.

It is found in the cell membrane. Together with TRK2, defines the major, high-affinity potassium influx transport system. Involved in maintenance of the proper sodium/potassium ratio in the cell and in regulating the plasma membrane potential. The chain is Potassium transport protein 1 (trk1) from Schizosaccharomyces pombe (strain 972 / ATCC 24843) (Fission yeast).